Here is a 506-residue protein sequence, read N- to C-terminus: Arabinose import ATP-binding protein AraG (506 aa).

ABC transporter domains are found at residues 10–245 (LEFC…MVGR) and 253–501 (YRSR…MLGN). 42 to 49 (GENGAGKS) provides a ligand contact to ATP.

It belongs to the ABC transporter superfamily. Arabinose importer (TC 3.A.1.2.2) family. As to quaternary structure, the complex is composed of two ATP-binding proteins (AraG), two transmembrane proteins (AraH) and a solute-binding protein (AraF).

The protein localises to the cell inner membrane. It catalyses the reaction L-arabinose(out) + ATP + H2O = L-arabinose(in) + ADP + phosphate + H(+). Its function is as follows. Part of the ABC transporter complex AraFGH involved in arabinose import. Responsible for energy coupling to the transport system. This is Arabinose import ATP-binding protein AraG from Vibrio parahaemolyticus serotype O3:K6 (strain RIMD 2210633).